The sequence spans 270 residues: Shikimate dehydrogenase (NADP(+)) (270 aa).

Shikimate contacts are provided by residues 14–16 (SLS) and threonine 61. Lysine 65 (proton acceptor) is an active-site residue. Aspartate 77 contacts NADP(+). Shikimate is bound by residues asparagine 86 and aspartate 101. NADP(+) contacts are provided by residues 125–129 (GNGGA) and isoleucine 210. Tyrosine 212 contributes to the shikimate binding site. NADP(+) is bound at residue glycine 233.

It belongs to the shikimate dehydrogenase family. In terms of assembly, homodimer.

The enzyme catalyses shikimate + NADP(+) = 3-dehydroshikimate + NADPH + H(+). It functions in the pathway metabolic intermediate biosynthesis; chorismate biosynthesis; chorismate from D-erythrose 4-phosphate and phosphoenolpyruvate: step 4/7. In terms of biological role, involved in the biosynthesis of the chorismate, which leads to the biosynthesis of aromatic amino acids. Catalyzes the reversible NADPH linked reduction of 3-dehydroshikimate (DHSA) to yield shikimate (SA). In Clostridium beijerinckii (strain ATCC 51743 / NCIMB 8052) (Clostridium acetobutylicum), this protein is Shikimate dehydrogenase (NADP(+)).